Reading from the N-terminus, the 593-residue chain is NADH-quinone oxidoreductase subunit C/D (593 aa).

Positions 1–184 (MTADTAVSIP…DPFSLTLAKQ (184 aa)) are NADH dehydrogenase I subunit C. An NADH dehydrogenase I subunit D region spans residues 208–593 (DYMFLNLGPN…IDFVMADVDR (386 aa)).

The protein in the N-terminal section; belongs to the complex I 30 kDa subunit family. It in the C-terminal section; belongs to the complex I 49 kDa subunit family. NDH-1 is composed of 13 different subunits. Subunits NuoB, CD, E, F, and G constitute the peripheral sector of the complex.

It is found in the cell inner membrane. The catalysed reaction is a quinone + NADH + 5 H(+)(in) = a quinol + NAD(+) + 4 H(+)(out). Its function is as follows. NDH-1 shuttles electrons from NADH, via FMN and iron-sulfur (Fe-S) centers, to quinones in the respiratory chain. The immediate electron acceptor for the enzyme in this species is believed to be ubiquinone. Couples the redox reaction to proton translocation (for every two electrons transferred, four hydrogen ions are translocated across the cytoplasmic membrane), and thus conserves the redox energy in a proton gradient. The polypeptide is NADH-quinone oxidoreductase subunit C/D (Ectopseudomonas mendocina (strain ymp) (Pseudomonas mendocina)).